The primary structure comprises 113 residues: Protein ZEO1 (113 aa).

Over residues 1–16 the composition is skewed to polar residues; sequence MSEIQNKAETAAQDVQ. Residues 1–96 are disordered; it reads MSEIQNKAET…AVSEKKETKK (96 aa). The residue at position 2 (Ser-2) is an N-acetylserine. Ser-2 bears the Phosphoserine mark. The stretch at 2–97 forms a coiled coil; it reads SEIQNKAETA…VSEKKETKKE (96 aa). Over residues 17 to 37 the composition is skewed to basic and acidic residues; that stretch reads QKLEETKESLQNKGQEVKEQA. Glycyl lysine isopeptide (Lys-Gly) (interchain with G-Cter in ubiquitin) cross-links involve residues Lys-18 and Lys-23. Ser-25 is subject to Phosphoserine. Residues Lys-29 and Lys-34 each participate in a glycyl lysine isopeptide (Lys-Gly) (interchain with G-Cter in ubiquitin) cross-link. Ser-40 is modified (phosphoserine). Residue Lys-45 forms a Glycyl lysine isopeptide (Lys-Gly) (interchain with G-Cter in ubiquitin) linkage. Thr-49 is subject to Phosphothreonine. Residues 53 to 82 are compositionally biased toward basic and acidic residues; sequence EQVKKEEQNIADGVEQKKTEAANKVEETKK. Glycyl lysine isopeptide (Lys-Gly) (interchain with G-Cter in ubiquitin) cross-links involve residues Lys-57 and Lys-82.

As to quaternary structure, interacts with MID2. Post-translationally, phosphorylation of Ser-25 is induced 2-fold in response to mating pheromone.

The protein resides in the cell membrane. Its function is as follows. Acts antagonistically to MID2 in signaling cell wall stress to the PKC1-MPK1 cell integrity pathway. This Saccharomyces cerevisiae (strain ATCC 204508 / S288c) (Baker's yeast) protein is Protein ZEO1 (ZEO1).